The chain runs to 171 residues: Spiderine-2a (171 aa).

An N-terminal signal peptide occupies residues 1–18; it reads MKFALVLLGVCAFYLVNA. The propeptide at 19-58 is removed in mature form; it reads TGDLETELEASELQELQEALDLIAETPLESLEAEELEEAR. Residues 59-104 are linear cationic cytotoxin domain; it reads KFKLPKINWGKLASKAKDVYKKGQKLAKNKNVKKALKYGKQLAENL. Positions 118–171 constitute an Oxytoxin-type inhibitor cystine knot (ICK) domain; it reads NNKCWAIGTRCTDDCDCCPEHHCHCPAKSWTFGLIPCSCQVTESDKVNKCPPAE. 5 disulfide bridges follow: Cys-121–Cys-135, Cys-128–Cys-140, Cys-132–Cys-167, Cys-134–Cys-156, and Cys-142–Cys-154.

In terms of processing, disulfide bonds. In terms of tissue distribution, expressed by the venom gland.

It localises to the secreted. Functionally, has antimicrobial, insecticidal, cytolytic and cytotoxic activity. The polypeptide is Spiderine-2a (Oxyopes takobius (Lynx spider)).